The primary structure comprises 149 residues: Large ribosomal subunit protein bL9 (149 aa).

This sequence belongs to the bacterial ribosomal protein bL9 family.

Its function is as follows. Binds to the 23S rRNA. The sequence is that of Large ribosomal subunit protein bL9 from Amoebophilus asiaticus (strain 5a2).